The following is a 236-amino-acid chain: Mediator of RNA polymerase II transcription subunit 20 (236 aa).

It belongs to the Mediator complex subunit 20 family. In terms of assembly, component of the Mediator complex.

The protein localises to the nucleus. Component of the Mediator complex, a coactivator involved in the regulated transcription of nearly all RNA polymerase II-dependent genes. Mediator functions as a bridge to convey information from gene-specific regulatory proteins to the basal RNA polymerase II transcription machinery. Mediator is recruited to promoters by direct interactions with regulatory proteins and serves as a scaffold for the assembly of a functional preinitiation complex with RNA polymerase II and the general transcription factors. In Debaryomyces hansenii (strain ATCC 36239 / CBS 767 / BCRC 21394 / JCM 1990 / NBRC 0083 / IGC 2968) (Yeast), this protein is Mediator of RNA polymerase II transcription subunit 20 (SRB2).